Consider the following 27-residue polypeptide: HSDGTFTSELSRLRESARLQRLLQGLV.

Val-27 carries the valine amide modification.

This sequence belongs to the glucagon family.

It localises to the secreted. Functionally, hormone involved in different processes, such as regulation of the pH of the duodenal content, food intake and water homeostasis. Exerts its biological effects by binding to secretin receptor (SCTR), a G-protein coupled receptor expressed in the basolateral domain of several cells. Acts as a key gastrointestinal hormone by regulating the pH of the duodenal content. Secreted by S cells of the duodenum in the crypts of Lieberkuehn and regulates the pH of the duodenum by (1) inhibiting the secretion of gastric acid from the parietal cells of the stomach and (2) stimulating the production of bicarbonate (NaHCO(3)) from the ductal cells of the pancreas. Production of bicarbonate is essential to neutralize the pH and ensure no damage is done to the small intestine by the gastric acid. In addition to regulating the pH of the duodenal content, plays a central role in diet induced thermogenesis: acts as a non-sympathetic brown fat (BAT) activator mediating prandial thermogenesis, which consequentially induces satiation. Mechanistically, secretin released by the gut after a meal binds to secretin receptor (SCTR) in brown adipocytes, activating brown fat thermogenesis by stimulating lipolysis, which is sensed in the brain and promotes satiation. Also able to stimulate lipolysis in white adipocytes. Also plays an important role in cellular osmoregulation: released into the systemic circulation in response to hyperosmolality and acts at different levels in the hypothalamus, pituitary and kidney to regulate water homeostasis. Also plays a role in the central nervous system, possibly by acting as a neuropeptide hormone: required for hippocampal synaptic function and neural progenitor cells maintenance. The sequence is that of Secretin from Canis lupus familiaris (Dog).